Consider the following 86-residue polypeptide: Hepcidin-1 (86 aa).

Residues 1 to 22 (MKAFSVAVVLVIACMFILESTA) form the signal peptide. The propeptide occupies 23 to 59 (VPFSEVRTEEVGSFDSPVGEHQQPGGESMHLPEPFRF). 4 cysteine pairs are disulfide-bonded: Cys-68-Cys-84, Cys-71-Cys-74, Cys-72-Cys-80, and Cys-75-Cys-83.

This sequence belongs to the hepcidin family.

Its subcellular location is the secreted. Seems to act as a signaling molecule involved in the maintenance of iron homeostasis. Seems to be required in conjunction with HFE to regulate both intestinal iron absorption and iron storage in macrophages. May also have antimicrobial activity. This Salmo salar (Atlantic salmon) protein is Hepcidin-1 (hamp1).